Consider the following 603-residue polypeptide: Geraniol synthase Tps-5031G8, chloroplastic (603 aa).

The transit peptide at 1–35 (MCSISQKVVIGLNKAAANNCLQNLDRRGFKTRRVS) directs the protein to the chloroplast. The (2E)-geranyl diphosphate site is built by arginine 319, aspartate 356, aspartate 360, arginine 497, and aspartate 500. Mg(2+)-binding residues include aspartate 356 and aspartate 360. The DDXXD motif signature appears at 356-360 (DDVYD). 3 residues coordinate Mg(2+): aspartate 500, threonine 504, and glutamate 508.

This sequence belongs to the terpene synthase family. Tpsb subfamily. Monomer. The cofactor is Mg(2+). Mn(2+) serves as cofactor.

Its subcellular location is the plastid. It localises to the chloroplast. It carries out the reaction (2E)-geranyl diphosphate + H2O = (2E)-geraniol + diphosphate. The protein operates within secondary metabolite biosynthesis; terpenoid biosynthesis. In terms of biological role, monoterpene synthase (mono-TPS) involved in the biosynthesis of monoterpenes natural products. Catalyzes the conversion of (2E)-geranyl diphosphate (GPP) into geraniol. The chain is Geraniol synthase Tps-5031G8, chloroplastic from Perilla frutescens var. hirtella (Perilla citriodora).